Consider the following 546-residue polypeptide: Protein phosphatase 1G (546 aa).

Glycine 2 is lipidated: N-myristoyl glycine. Residue arginine 22 is modified to Omega-N-methylarginine. In terms of domain architecture, PPM-type phosphatase spans 26 to 505 (PYGFSAMQGW…DNMTCIIICF (480 aa)). Residues aspartate 60 and glycine 61 each contribute to the Mn(2+) site. Disordered stretches follow at residues 116–139 (QIAGRPTEDEDEKEKVADEDDVDN) and 161–328 (GQNC…SDSG). A Phosphothreonine modification is found at threonine 122. A compositionally biased stretch (acidic residues) spans 123–139 (EDEDEKEKVADEDDVDN). Serine 183 carries the phosphoserine modification. The span at 259 to 312 (DSEDESDEAEEEEEDSEECSEEEDGYSSEEAENEEDEDDTEEAEEDDEEEEEEM) shows a compositional bias: acidic residues. Lysine 383 is modified (N6-acetyllysine). Positions 441 and 496 each coordinate Mn(2+). Residues 512-546 (ELQPESGKRKLEEVLSTEGAEENGNSDKKKKAKRD) are disordered. Serine 527 carries the post-translational modification Phosphoserine.

The protein belongs to the PP2C family. As to quaternary structure, interacts with NOL3; may dephosphorylate NOL3. Requires Mg(2+) as cofactor. The cofactor is Mn(2+). Widely expressed. Most abundant in testis, skeletal muscle, and heart.

It is found in the cytoplasm. Its subcellular location is the membrane. It catalyses the reaction O-phospho-L-seryl-[protein] + H2O = L-seryl-[protein] + phosphate. The enzyme catalyses O-phospho-L-threonyl-[protein] + H2O = L-threonyl-[protein] + phosphate. This is Protein phosphatase 1G (PPM1G) from Homo sapiens (Human).